A 172-amino-acid polypeptide reads, in one-letter code: Lipoprotein signal peptidase (172 aa).

A run of 2 helical transmembrane segments spans residues 70–90 (ERWL…AWIW) and 94–114 (AKGD…NIAD). Residues aspartate 123 and aspartate 142 contribute to the active site. Residues 134-154 (PFLVFNVADAAITIGVLILVL) form a helical membrane-spanning segment.

This sequence belongs to the peptidase A8 family.

The protein resides in the cell inner membrane. The enzyme catalyses Release of signal peptides from bacterial membrane prolipoproteins. Hydrolyzes -Xaa-Yaa-Zaa-|-(S,diacylglyceryl)Cys-, in which Xaa is hydrophobic (preferably Leu), and Yaa (Ala or Ser) and Zaa (Gly or Ala) have small, neutral side chains.. The protein operates within protein modification; lipoprotein biosynthesis (signal peptide cleavage). This protein specifically catalyzes the removal of signal peptides from prolipoproteins. The polypeptide is Lipoprotein signal peptidase (Rhizorhabdus wittichii (strain DSM 6014 / CCUG 31198 / JCM 15750 / NBRC 105917 / EY 4224 / RW1) (Sphingomonas wittichii)).